The chain runs to 443 residues: UPF0597 protein DVU_0440 (443 aa).

The protein belongs to the UPF0597 family.

This Nitratidesulfovibrio vulgaris (strain ATCC 29579 / DSM 644 / CCUG 34227 / NCIMB 8303 / VKM B-1760 / Hildenborough) (Desulfovibrio vulgaris) protein is UPF0597 protein DVU_0440.